A 377-amino-acid polypeptide reads, in one-letter code: Queuine tRNA-ribosyltransferase (377 aa).

Asp89 acts as the Proton acceptor in catalysis. Substrate contacts are provided by residues 89 to 93 (DSGGF), Asp143, Gln187, and Gly214. Residues 245-251 (GVGKPED) are RNA binding. The active-site Nucleophile is Asp264. Residues 269 to 273 (TRNAR) are RNA binding; important for wobble base 34 recognition. 4 residues coordinate Zn(2+): Cys302, Cys304, Cys307, and His333.

Belongs to the queuine tRNA-ribosyltransferase family. Homodimer. Within each dimer, one monomer is responsible for RNA recognition and catalysis, while the other monomer binds to the replacement base PreQ1. Requires Zn(2+) as cofactor.

It catalyses the reaction 7-aminomethyl-7-carbaguanine + guanosine(34) in tRNA = 7-aminomethyl-7-carbaguanosine(34) in tRNA + guanine. It functions in the pathway tRNA modification; tRNA-queuosine biosynthesis. Functionally, catalyzes the base-exchange of a guanine (G) residue with the queuine precursor 7-aminomethyl-7-deazaguanine (PreQ1) at position 34 (anticodon wobble position) in tRNAs with GU(N) anticodons (tRNA-Asp, -Asn, -His and -Tyr). Catalysis occurs through a double-displacement mechanism. The nucleophile active site attacks the C1' of nucleotide 34 to detach the guanine base from the RNA, forming a covalent enzyme-RNA intermediate. The proton acceptor active site deprotonates the incoming PreQ1, allowing a nucleophilic attack on the C1' of the ribose to form the product. After dissociation, two additional enzymatic reactions on the tRNA convert PreQ1 to queuine (Q), resulting in the hypermodified nucleoside queuosine (7-(((4,5-cis-dihydroxy-2-cyclopenten-1-yl)amino)methyl)-7-deazaguanosine). This chain is Queuine tRNA-ribosyltransferase, found in Shewanella halifaxensis (strain HAW-EB4).